A 481-amino-acid chain; its full sequence is 3-isopropylmalate dehydratase large subunit (481 aa).

The [4Fe-4S] cluster site is built by C357, C417, and C420.

This sequence belongs to the aconitase/IPM isomerase family. LeuC type 1 subfamily. As to quaternary structure, heterodimer of LeuC and LeuD. Requires [4Fe-4S] cluster as cofactor.

The enzyme catalyses (2R,3S)-3-isopropylmalate = (2S)-2-isopropylmalate. It participates in amino-acid biosynthesis; L-leucine biosynthesis; L-leucine from 3-methyl-2-oxobutanoate: step 2/4. Its function is as follows. Catalyzes the isomerization between 2-isopropylmalate and 3-isopropylmalate, via the formation of 2-isopropylmaleate. This chain is 3-isopropylmalate dehydratase large subunit, found in Mycolicibacterium vanbaalenii (strain DSM 7251 / JCM 13017 / BCRC 16820 / KCTC 9966 / NRRL B-24157 / PYR-1) (Mycobacterium vanbaalenii).